Here is a 159-residue protein sequence, read N- to C-terminus: 2-C-methyl-D-erythritol 2,4-cyclodiphosphate synthase (159 aa).

Asp-8 and His-10 together coordinate a divalent metal cation. 4-CDP-2-C-methyl-D-erythritol 2-phosphate contacts are provided by residues 8 to 10 (DSH) and 34 to 35 (HS). Residue His-42 coordinates a divalent metal cation. Residues 56 to 58 (DIG), 61 to 65 (FPDSD), Phe-139, and Arg-142 contribute to the 4-CDP-2-C-methyl-D-erythritol 2-phosphate site.

It belongs to the IspF family. In terms of assembly, homotrimer. A divalent metal cation is required as a cofactor.

It carries out the reaction 4-CDP-2-C-methyl-D-erythritol 2-phosphate = 2-C-methyl-D-erythritol 2,4-cyclic diphosphate + CMP. It functions in the pathway isoprenoid biosynthesis; isopentenyl diphosphate biosynthesis via DXP pathway; isopentenyl diphosphate from 1-deoxy-D-xylulose 5-phosphate: step 4/6. Involved in the biosynthesis of isopentenyl diphosphate (IPP) and dimethylallyl diphosphate (DMAPP), two major building blocks of isoprenoid compounds. Catalyzes the conversion of 4-diphosphocytidyl-2-C-methyl-D-erythritol 2-phosphate (CDP-ME2P) to 2-C-methyl-D-erythritol 2,4-cyclodiphosphate (ME-CPP) with a corresponding release of cytidine 5-monophosphate (CMP). The polypeptide is 2-C-methyl-D-erythritol 2,4-cyclodiphosphate synthase (Syntrophus aciditrophicus (strain SB)).